Reading from the N-terminus, the 289-residue chain is 4-hydroxy-3-methylbut-2-enyl diphosphate reductase (289 aa).

Cys13 contributes to the [4Fe-4S] cluster binding site. Positions 42 and 74 each coordinate (2E)-4-hydroxy-3-methylbut-2-enyl diphosphate. Positions 42 and 74 each coordinate dimethylallyl diphosphate. His42 and His74 together coordinate isopentenyl diphosphate. Cys96 serves as a coordination point for [4Fe-4S] cluster. His124 contributes to the (2E)-4-hydroxy-3-methylbut-2-enyl diphosphate binding site. Residue His124 coordinates dimethylallyl diphosphate. His124 contributes to the isopentenyl diphosphate binding site. Catalysis depends on Glu126, which acts as the Proton donor. Thr165 is a (2E)-4-hydroxy-3-methylbut-2-enyl diphosphate binding site. Cys193 contributes to the [4Fe-4S] cluster binding site. 3 residues coordinate (2E)-4-hydroxy-3-methylbut-2-enyl diphosphate: Ser221, Asn223, and Ser265. Residues Ser221, Asn223, and Ser265 each contribute to the dimethylallyl diphosphate site. Positions 221, 223, and 265 each coordinate isopentenyl diphosphate.

Belongs to the IspH family. [4Fe-4S] cluster is required as a cofactor.

It carries out the reaction isopentenyl diphosphate + 2 oxidized [2Fe-2S]-[ferredoxin] + H2O = (2E)-4-hydroxy-3-methylbut-2-enyl diphosphate + 2 reduced [2Fe-2S]-[ferredoxin] + 2 H(+). It catalyses the reaction dimethylallyl diphosphate + 2 oxidized [2Fe-2S]-[ferredoxin] + H2O = (2E)-4-hydroxy-3-methylbut-2-enyl diphosphate + 2 reduced [2Fe-2S]-[ferredoxin] + 2 H(+). The protein operates within isoprenoid biosynthesis; dimethylallyl diphosphate biosynthesis; dimethylallyl diphosphate from (2E)-4-hydroxy-3-methylbutenyl diphosphate: step 1/1. It participates in isoprenoid biosynthesis; isopentenyl diphosphate biosynthesis via DXP pathway; isopentenyl diphosphate from 1-deoxy-D-xylulose 5-phosphate: step 6/6. With respect to regulation, highly sensitive to dioxygen. Functionally, catalyzes the conversion of 1-hydroxy-2-methyl-2-(E)-butenyl 4-diphosphate (HMBPP) into a mixture of isopentenyl diphosphate (IPP) and dimethylallyl diphosphate (DMAPP). Acts in the terminal step of the DOXP/MEP pathway for isoprenoid precursor biosynthesis. The chain is 4-hydroxy-3-methylbut-2-enyl diphosphate reductase from Aquifex aeolicus (strain VF5).